The sequence spans 1038 residues: Bone morphogenetic protein receptor type-2 (1038 aa).

Positions 1-26 (MTSSLQRPWRVPWLPWTILLVSTAAA) are cleaved as a signal peptide. Over 27 to 150 (SQNQERLCAF…PPHSFNRDET (124 aa)) the chain is Extracellular. Disulfide bonds link Cys-34–Cys-66, Cys-60–Cys-84, Cys-94–Cys-117, Cys-99–Cys-116, and Cys-118–Cys-123. Residue Asn-55 is glycosylated (N-linked (GlcNAc...) asparagine). A glycan (N-linked (GlcNAc...) asparagine) is linked at Asn-110. N-linked (GlcNAc...) asparagine glycosylation occurs at Asn-126. Residues 151–171 (IIIALASVSVLAVLIVALCFG) form a helical membrane-spanning segment. At 172–1038 (YRMLTGDRKQ…VSKDIGMNCL (867 aa)) the chain is on the cytoplasmic side. The 302-residue stretch at 203–504 (LKLLELIGRG…QCAEERMAEL (302 aa)) folds into the Protein kinase domain. ATP is bound by residues 209-217 (IGRGRYGAV), Lys-230, and 280-282 (EYY). The active-site Proton acceptor is the Asp-333. ATP-binding positions include 337–338 (RN) and Asp-351. Thr-379 is modified (phosphothreonine). Residue Ser-586 is modified to Phosphoserine. A disordered region spans residues 593–626 (QAQARIPSPETSVTSLSTNTTTTNTTGLTPSTGM). The segment covering 603-626 (TSVTSLSTNTTTTNTTGLTPSTGM) has biased composition (low complexity). Ser-680 and Ser-681 each carry phosphoserine. Disordered regions lie at residues 746–770 (PKQQNLPKRPTSLPLNTKNSTKEPR) and 872–972 (RREQ…EKIK). The segment covering 872-896 (RREQQAGHDEGVLDRLVDRRERPLE) has biased composition (basic and acidic residues). A compositionally biased stretch (polar residues) spans 937–964 (RPNSLDLSATNVLDGSSIQIGESTQDGK).

It belongs to the protein kinase superfamily. TKL Ser/Thr protein kinase family. TGFB receptor subfamily. As to quaternary structure, interacts with GDF5. Interacts with BMP4. Interacts with SCUBE3. Interacts with TSC22D1/TSC-22. Interacts with activin A/INHBA. Requires Mg(2+) as cofactor. Mn(2+) serves as cofactor. Highly expressed in heart and liver.

It localises to the cell membrane. The enzyme catalyses L-threonyl-[receptor-protein] + ATP = O-phospho-L-threonyl-[receptor-protein] + ADP + H(+). It carries out the reaction L-seryl-[receptor-protein] + ATP = O-phospho-L-seryl-[receptor-protein] + ADP + H(+). On ligand binding, forms a receptor complex consisting of two type II and two type I transmembrane serine/threonine kinases. Type II receptors phosphorylate and activate type I receptors which autophosphorylate, then bind and activate SMAD transcriptional regulators. Can also mediate signaling through the activation of the p38MAPK cascade. Binds to BMP7, BMP2 and, less efficiently, BMP4. Binding is weak but enhanced by the presence of type I receptors for BMPs. Mediates induction of adipogenesis by GDF6. Promotes signaling also by binding to activin A/INHBA. The polypeptide is Bone morphogenetic protein receptor type-2 (BMPR2) (Homo sapiens (Human)).